A 314-amino-acid polypeptide reads, in one-letter code: 4-hydroxy-3-methylbut-2-enyl diphosphate reductase (314 aa).

Cys12 serves as a coordination point for [4Fe-4S] cluster. His41 and His74 together coordinate (2E)-4-hydroxy-3-methylbut-2-enyl diphosphate. Positions 41 and 74 each coordinate dimethylallyl diphosphate. Residues His41 and His74 each coordinate isopentenyl diphosphate. A [4Fe-4S] cluster-binding site is contributed by Cys96. Residue His124 coordinates (2E)-4-hydroxy-3-methylbut-2-enyl diphosphate. Residue His124 coordinates dimethylallyl diphosphate. Isopentenyl diphosphate is bound at residue His124. Glu126 acts as the Proton donor in catalysis. Thr167 lines the (2E)-4-hydroxy-3-methylbut-2-enyl diphosphate pocket. Cys197 contacts [4Fe-4S] cluster. (2E)-4-hydroxy-3-methylbut-2-enyl diphosphate contacts are provided by Ser225, Ser226, Asn227, and Ser269. Residues Ser225, Ser226, Asn227, and Ser269 each contribute to the dimethylallyl diphosphate site. Positions 225, 226, 227, and 269 each coordinate isopentenyl diphosphate.

This sequence belongs to the IspH family. [4Fe-4S] cluster is required as a cofactor.

The catalysed reaction is isopentenyl diphosphate + 2 oxidized [2Fe-2S]-[ferredoxin] + H2O = (2E)-4-hydroxy-3-methylbut-2-enyl diphosphate + 2 reduced [2Fe-2S]-[ferredoxin] + 2 H(+). The enzyme catalyses dimethylallyl diphosphate + 2 oxidized [2Fe-2S]-[ferredoxin] + H2O = (2E)-4-hydroxy-3-methylbut-2-enyl diphosphate + 2 reduced [2Fe-2S]-[ferredoxin] + 2 H(+). The protein operates within isoprenoid biosynthesis; dimethylallyl diphosphate biosynthesis; dimethylallyl diphosphate from (2E)-4-hydroxy-3-methylbutenyl diphosphate: step 1/1. It participates in isoprenoid biosynthesis; isopentenyl diphosphate biosynthesis via DXP pathway; isopentenyl diphosphate from 1-deoxy-D-xylulose 5-phosphate: step 6/6. In terms of biological role, catalyzes the conversion of 1-hydroxy-2-methyl-2-(E)-butenyl 4-diphosphate (HMBPP) into a mixture of isopentenyl diphosphate (IPP) and dimethylallyl diphosphate (DMAPP). Acts in the terminal step of the DOXP/MEP pathway for isoprenoid precursor biosynthesis. The protein is 4-hydroxy-3-methylbut-2-enyl diphosphate reductase of Pseudoalteromonas atlantica (strain T6c / ATCC BAA-1087).